The following is a 1284-amino-acid chain: Kinesin-like protein KIN-4C (1284 aa).

Residues 12–364 (SVKVVVNIRP…LKYANRARNI (353 aa)) enclose the Kinesin motor domain. Residue 91 to 98 (GQTGSGKT) participates in ATP binding. 3 coiled-coil regions span residues 407–445 (SAAL…EQLA), 561–711 (RDHS…QFRS), and 911–950 (MCKE…NMLL). 2 disordered regions span residues 1040–1070 (RRQT…SQEK) and 1158–1284 (MSEK…NHLR). Positions 1043-1070 (TVSSHLNPNPGSGTTQKSAKSEMASQEK) are enriched in polar residues. Composition is skewed to basic and acidic residues over residues 1158–1172 (MSEK…RKPL) and 1275–1284 (NANEKENHLR).

The protein belongs to the TRAFAC class myosin-kinesin ATPase superfamily. Kinesin family. KIN-4 subfamily. As to quaternary structure, homodimer.

Functionally, microtubule-dependent motor protein involved in the control of the oriented deposition of cellulose microfibrils. This chain is Kinesin-like protein KIN-4C, found in Oryza sativa subsp. japonica (Rice).